Here is a 485-residue protein sequence, read N- to C-terminus: PTS system arbutin-, cellobiose-, and salicin-specific EIIBC component (485 aa).

Residues 1-88 (MAKNYAALAR…VSLLPGDMQP (88 aa)) form the PTS EIIB type-1 domain. Cys28 acts as the Phosphocysteine intermediate; for EIIB activity in catalysis. A run of 10 helical transmembrane segments spans residues 102–122 (IGAGILDALIGTMSPLIPAII), 147–167 (LTILNVIGDGAFFFLPLMVAA), 177–197 (MSLAIAIAGVLVHPSFIELMA), 207–227 (FALIPVTAVKYTYTVIPALVM), 254–274 (LIVLIAAPLAILLIGPIGIWI), 285–305 (IHGYLGWLSVAIMGALWPLLV), 330–350 (VMPSEIGANLSLGGSSLAVAW), 363–383 (AAAASAIMAGISEPALYGVAI), 389–409 (LIASLISGFICGAVAGMAGLA), and 433–453 (IVWVFAVMALAVVLSFILTLL). Residues 108-470 (DALIGTMSPL…VEEAAAQARK (363 aa)) form the PTS EIIC type-1 domain.

The protein resides in the cell inner membrane. The phosphoenolpyruvate-dependent sugar phosphotransferase system (sugar PTS), a major carbohydrate active -transport system, catalyzes the phosphorylation of incoming sugar substrates concomitantly with their translocation across the cell membrane. This system is involved in arbutin, cellobiose, and salicin transport. In Escherichia coli (strain K12), this protein is PTS system arbutin-, cellobiose-, and salicin-specific EIIBC component (ascF).